Reading from the N-terminus, the 368-residue chain is MIRIYTQQTQGQAWLSNHQQKSVVFACGLGFTDTALIPNISAAGATPEARKYTAIADAECICHGFREKAIYPLPPLIVGASPAILSRAILSHYQIPAYLFDTGLWLKPDKNAVDCIDVSGQKARCVSTGKALEFSTVNKLFEQGLTWGETLATQYLNHLFVLGECVVAGTTTALGVLTGLGYDANQKVNSSYIECNHDLKWQIVQTGLKKANLNPNPDPFAVVAAVGDPMQIFVAGMAIALSRTQGVLLAGGTQMLAVYALMERICKYHSLDFDPKNIAVGTTRWVAEDPTGDTVGLAELIGEVPLLATQLSFQTSQYSQLQSYEQGYVKEGVGAGGLAIAAHLAYGATQAELLAMIERTIVPYLAAN.

The protein belongs to the UPF0284 family.

This is UPF0284 protein SYNPCC7002_A1742 from Picosynechococcus sp. (strain ATCC 27264 / PCC 7002 / PR-6) (Agmenellum quadruplicatum).